The chain runs to 234 residues: Cyclo(L-leucyl-L-leucyl) synthase (234 aa).

The Nucleophile role is filled by serine 28. Substrate contacts are provided by residues 171-175 (YVLAE), tyrosine 195, and 200-201 (EL).

Belongs to the CDPS family.

The enzyme catalyses 2 L-leucyl-tRNA(Leu) = cyclo(L-leucyl-L-leucyl) + 2 tRNA(Leu) + 2 H(+). In terms of biological role, it uses activated amino acids in the form of aminoacyl-tRNAs (aa-tRNAs) as substrates to catalyze the ATP-independent formation of cyclodipeptides which are intermediates in diketopiperazine (DKP) biosynthetic pathways. Catalyzes the formation of cyclo(L-Leu-L-Leu) (cLL) from L-leucyl-tRNA(Leu). Can incorporate various nonpolar residues, such as L-phenylalanine, L-leucine and L-methionine, into cyclodipeptides. In Staphylococcus haemolyticus (strain JCSC1435), this protein is Cyclo(L-leucyl-L-leucyl) synthase.